The following is a 508-amino-acid chain: WD repeat-containing protein JIP5 (508 aa).

WD repeat units lie at residues 46–94 (LATG…GVET), 105–144 (RHKG…VVKK), 150–189 (GQNV…QTNL), 194–234 (HNGD…EGDF), 252–293 (DQED…LADQ), and 344–381 (SKLD…QLTP). The disordered stretch occupies residues 372 to 508 (DSEKSEQLTP…THGIRRFEGL (137 aa)). Residues 491 to 508 (IKPERSMKTHGIRRFEGL) are compositionally biased toward basic and acidic residues.

Belongs to the WD repeat WDR55 family.

It localises to the nucleus. The protein resides in the nucleolus. In Eremothecium gossypii (strain ATCC 10895 / CBS 109.51 / FGSC 9923 / NRRL Y-1056) (Yeast), this protein is WD repeat-containing protein JIP5 (JIP5).